The primary structure comprises 131 residues: Cruxhalorhodopsin-1 (131 aa).

The chain crosses the membrane as a helical span at residues 1 to 11 (PMILLALGLLA). At 12–14 (DTD) the chain is on the cytoplasmic side. Residues 15-38 (IASLFTAITMDIGMCVTGLAAALI) form a helical membrane-spanning segment. Topologically, residues 39 to 41 (TSS) are extracellular. A helical membrane pass occupies residues 42 to 64 (HLLRWVFYGISCAFFVAVLYVLL). Over 65 to 76 (VQWPADAEAAGT) the chain is Cytoplasmic. The helical transmembrane segment at 77–100 (SEIFGTLKILTVVLWLGYPILWAL) threads the bilayer. The Extracellular segment spans residues 101 to 109 (GSEGVALLS). A helical transmembrane segment spans residues 110-131 (VGVTSWGYSGLDILAKYVFAFI). K125 carries the N6-(retinylidene)lysine modification.

The protein belongs to the archaeal/bacterial/fungal opsin family.

Its subcellular location is the cell membrane. Functionally, light-driven chloride pump. The sequence is that of Cruxhalorhodopsin-1 (choP1) from Haloarcula argentinensis.